The sequence spans 143 residues: Large ribosomal subunit protein uL11 (143 aa).

This sequence belongs to the universal ribosomal protein uL11 family. Part of the ribosomal stalk of the 50S ribosomal subunit. Interacts with L10 and the large rRNA to form the base of the stalk. L10 forms an elongated spine to which L12 dimers bind in a sequential fashion forming a multimeric L10(L12)X complex. In terms of processing, one or more lysine residues are methylated.

Forms part of the ribosomal stalk which helps the ribosome interact with GTP-bound translation factors. The chain is Large ribosomal subunit protein uL11 from Janthinobacterium sp. (strain Marseille) (Minibacterium massiliensis).